Here is a 362-residue protein sequence, read N- to C-terminus: Peptide chain release factor 1 (362 aa).

The residue at position 237 (Q237) is an N5-methylglutamine. The span at 285-295 (EEKRHAEEAST) shows a compositional bias: basic and acidic residues. The disordered stretch occupies residues 285-311 (EEKRHAEEASTRRNLLGSGDRSDRIRT).

Belongs to the prokaryotic/mitochondrial release factor family. Post-translationally, methylated by PrmC. Methylation increases the termination efficiency of RF1.

The protein localises to the cytoplasm. In terms of biological role, peptide chain release factor 1 directs the termination of translation in response to the peptide chain termination codons UAG and UAA. The polypeptide is Peptide chain release factor 1 (Photobacterium profundum (strain SS9)).